Here is a 336-residue protein sequence, read N- to C-terminus: MAVDKEVELHAQAWDHALSYITPTALSAAVELEIPDILEDHGGLMSLSELSAASGCPREPLYRLMRFLIFHGIFTKSNDCYAQSPLSRVFTRENLGPYMLMQATPVTRSPAGLSGEALKTGTPLYLKSIRGEDSWNDPAYGFHMRAFTNGMAAHARLTAAAIVTNYPTAFNGVRSVVDVGGRHGMAIGKLVEAFPWVRGIAFDLPEVVADAPPRKGVDFVGGDMFESLPKADAVMLMWVLHDWSDDKCIEILKKCKEAIPTSTGKVMIVDAIINEEGEGDEFSGARLSLDMTMMAMTTQGKERSYKEWVHLLNEAGFSKHTVKNIKTIEFVIEAYP.

Residues Tyr-140 and Asp-203 each contribute to the S-adenosyl-L-methionine site. His-241 (proton acceptor) is an active-site residue.

The protein belongs to the class I-like SAM-binding methyltransferase superfamily. Cation-independent O-methyltransferase family. As to quaternary structure, homodimer. As to expression, expressed in leaves.

It catalyses the reaction ladanein + S-adenosyl-L-methionine = salvigenin + S-adenosyl-L-homocysteine + H(+). The enzyme catalyses scutellarein 7-methyl ether + S-adenosyl-L-methionine = cirsimaritin + S-adenosyl-L-homocysteine + H(+). The protein operates within flavonoid metabolism. In terms of biological role, flavonoid 6-O-methyltransferase involved in the biosynthesis of polymethoxylated flavonoids natural products such as nevadensin and salvigenin (SALV), aroma compounds which contribute to the flavor of sweet basil, and exhibit pharmacological activities such as anti-allergic, anti-oxidant, antibacterial, anti-proliferative, and anti-inflammatory effects. Catalyzes S-adenosylmethionine-dependent regioselective 6-O-methylation of flavonoids; active on various hydroxylated flavonoid substrates, including scutellarein-7-methyl ether (SCU7Me) and ladanein (LAD). The sequence is that of Flavonoid 6-O-methyltransferase 4 from Ocimum basilicum (Sweet basil).